A 301-amino-acid polypeptide reads, in one-letter code: Fluoroquinolones export ATP-binding protein MT2762 (301 aa).

The ABC transporter domain occupies 18-246 (IRVRGLTFRY…RSRRRVRVEY (229 aa)). 52-59 (GPSGAGKS) contacts ATP.

The protein belongs to the ABC transporter superfamily. In terms of assembly, the complex is composed of 2 ATP-binding proteins and 2 transmembrane proteins.

It localises to the cell membrane. Its function is as follows. Part of the ABC transporter complex involved in fluoroquinolones export. Probably responsible for energy coupling to the transport system. In Mycobacterium tuberculosis (strain CDC 1551 / Oshkosh), this protein is Fluoroquinolones export ATP-binding protein MT2762.